We begin with the raw amino-acid sequence, 609 residues long: MDDQNKNLILATALSFLVILVWFILFPPPEQTEAPATEIATTNGTAVQTPTAAATEGGAGEVPALDSAAPTQAEAPRVQIDTPRLKGSVSLLGGRIDELSLKDYRVSLDEDAEIVEMLTPAGSTSAYYALYGWAPGAGLNAADVPGPLTEWSLESGDTLSVGTPVTLSWSNGSGVTFRRTLAVDEDYMFTVTQSVENGSAAPIGAAPYGILARHGIGEDADLPGLKNFFILHEGVVAMNDGTLSEIDYKDVRKFDIDPNEGAQAEVFQNKSDGWIGFTDHYWMATLIPGSGTAFKSAAKYDARRKIYQAETVLPTMSVAPGESAEVTTRLFAGAKEWESIRAYQQDGVQKFLDSIDWGWFFFLTKPIFWLLHQINGLIGNMGWSIIGLTLIIKAIVFPLALKSYVSMAKMKELQPQMEALKEAAGDDRQKMQQGMMELYKKEKVNPAAGCLPILLQIPIFFSLYKVIFVTIELRQAPWFGPFRDLSMPDPTSIMNFFGWLPWAGPEAGSLTATILIGILPLLLGISMWLQQKLNPAPTDPTQAMIFAWMPWVFMFMLGSFASGLVVYWIANNTITFTQQYIIMRSHGYKPDVFGNIKSGFARRAKADKK.

5 consecutive transmembrane segments (helical) span residues 8–28 (LILATALSFLVILVWFILFPP), 381–401 (MGWSIIGLTLIIKAIVFPLAL), 451–471 (LPILLQIPIFFSLYKVIFVTI), 509–529 (SLTATILIGILPLLLGISMWL), and 545–565 (IFAWMPWVFMFMLGSFASGLV).

It belongs to the OXA1/ALB3/YidC family. Type 1 subfamily. Interacts with the Sec translocase complex via SecD. Specifically interacts with transmembrane segments of nascent integral membrane proteins during membrane integration.

The protein resides in the cell inner membrane. Its function is as follows. Required for the insertion and/or proper folding and/or complex formation of integral membrane proteins into the membrane. Involved in integration of membrane proteins that insert both dependently and independently of the Sec translocase complex, as well as at least some lipoproteins. Aids folding of multispanning membrane proteins. In Ruegeria pomeroyi (strain ATCC 700808 / DSM 15171 / DSS-3) (Silicibacter pomeroyi), this protein is Membrane protein insertase YidC.